A 284-amino-acid chain; its full sequence is MKVFILALLALAATTAIAQLETTCSQGFGQSQQQQQPGQRQLLEQMKPCVAFLQQKCSPLRMPFLQTQVEQLSSCQIVQYQCCQQLAQIPERTRCHAIHIVVEAIIQQQSQQQWQEPQQQAQHKSMRMLLENLSLMCNIYVPVQCQQQQQLGQQQQQQLQEQLTPCTTFLQQQCSPVTVPFPQIPVDQPTSCQNVQHQCCRQLSQIPEQFRCQAIHNVAEAIRQQQPQQQWQGMYQPQQPAQLESIRMSLQALRSMRSIYIPVQCPAPTTYNIPLVATYTGGAC.

An N-terminal signal peptide occupies residues 1 to 18; the sequence is MKVFILALLALAATTAIA.

Belongs to the prolamin family. Post-translationally, contains disulfide bonds.

Its function is as follows. Seed storage protein. Might be integrated via inter-chain disulfide bonds within the glutenin polymer. This is Avenin-like b10 from Triticum aestivum (Wheat).